Here is a 357-residue protein sequence, read N- to C-terminus: Alpha-2-macroglobulin receptor-associated protein (357 aa).

The first 34 residues, 1 to 34 (MAPRRVRSFLRGLPALLLLLLFLGPWPAASHGGK), serve as a signal peptide directing secretion. The segment at 32–52 (GGKYSREKNQPKPSPKRESGE) is disordered. Basic and acidic residues predominate over residues 35-52 (YSREKNQPKPSPKRESGE). S50 and S135 each carry phosphoserine. The stretch at 219–310 (SRHTELKEKL…AHEKLRHAES (92 aa)) forms a coiled coil. An LDL receptor binding region spans residues 237 to 353 (RLRRVSHQGY…DLSGRISRAR (117 aa)). Position 248 is a phosphothreonine (T248). N268 carries N-linked (GlcNAc...) asparagine glycosylation. A Prevents secretion from ER motif is present at residues 354–357 (HNEL).

This sequence belongs to the alpha-2-MRAP family. Interacts with the LRP1/alpha-2-macroglobulin receptor heavy and light chains; the interaction is transient and coincides with a reduction of ligand binding by the receptor. Interacts with LRP2/glycoprotein 330. Interacts with LRP1B; binding is followed by internalization and degradation. Interacts with LDLR. Interacts with SORL1. Interacts with LRP1; this interaction is followed by rapid internalization. In terms of processing, N-glycosylated.

The protein localises to the rough endoplasmic reticulum lumen. It is found in the endoplasmic reticulum-Golgi intermediate compartment lumen. The protein resides in the golgi apparatus. It localises to the cis-Golgi network. Its subcellular location is the golgi apparatus lumen. The protein localises to the endosome lumen. It is found in the cell surface. Functionally, molecular chaperone for LDL receptor-related proteins that may regulate their ligand binding activity along the secretory pathway. The sequence is that of Alpha-2-macroglobulin receptor-associated protein from Homo sapiens (Human).